The chain runs to 362 residues: Phosphoserine aminotransferase (362 aa).

Residue Arg-43 coordinates L-glutamate. Pyridoxal 5'-phosphate contacts are provided by residues 77–78 (AS), Trp-103, Thr-153, Asp-173, and Gln-196. The residue at position 197 (Lys-197) is an N6-(pyridoxal phosphate)lysine. 238–239 (NT) contributes to the pyridoxal 5'-phosphate binding site.

The protein belongs to the class-V pyridoxal-phosphate-dependent aminotransferase family. SerC subfamily. In terms of assembly, homodimer. Pyridoxal 5'-phosphate serves as cofactor.

Its subcellular location is the cytoplasm. It catalyses the reaction O-phospho-L-serine + 2-oxoglutarate = 3-phosphooxypyruvate + L-glutamate. It carries out the reaction 4-(phosphooxy)-L-threonine + 2-oxoglutarate = (R)-3-hydroxy-2-oxo-4-phosphooxybutanoate + L-glutamate. Its pathway is amino-acid biosynthesis; L-serine biosynthesis; L-serine from 3-phospho-D-glycerate: step 2/3. The protein operates within cofactor biosynthesis; pyridoxine 5'-phosphate biosynthesis; pyridoxine 5'-phosphate from D-erythrose 4-phosphate: step 3/5. Functionally, catalyzes the reversible conversion of 3-phosphohydroxypyruvate to phosphoserine and of 3-hydroxy-2-oxo-4-phosphonooxybutanoate to phosphohydroxythreonine. In Niallia circulans (Bacillus circulans), this protein is Phosphoserine aminotransferase (serC).